A 565-amino-acid chain; its full sequence is Putative ribonucleoside-diphosphate reductase large subunit (565 aa).

Residues Ser-60, 74 to 75, Gly-103, 256 to 260, and 400 to 404 contribute to the substrate site; these read SC, NLCNE, and PNANS. The cysteines at positions 75 and 273 are disulfide-linked. Catalysis depends on Asn-256, which acts as the Proton acceptor. The Cysteine radical intermediate role is filled by Cys-258. The active-site Proton acceptor is Glu-260.

The protein belongs to the ribonucleoside diphosphate reductase large chain family. As to quaternary structure, heterotetramer composed of a homodimer of the large subunit (R1) and a homodimer of the small subunit (R2). Larger multisubunit protein complex are also active, composed of (R1)n(R2)n.

The catalysed reaction is a 2'-deoxyribonucleoside 5'-diphosphate + [thioredoxin]-disulfide + H2O = a ribonucleoside 5'-diphosphate + [thioredoxin]-dithiol. Under complex allosteric control mediated by deoxynucleoside triphosphates and ATP binding. The type of nucleotide bound at the specificity site determines substrate preference. It seems probable that ATP makes the enzyme reduce CDP and UDP, dGTP favors ADP reduction and dTTP favors GDP reduction. In terms of biological role, ribonucleoside-diphosphate reductase holoenzyme provides the precursors necessary for viral DNA synthesis. Allows virus growth in non-dividing cells. Catalyzes the biosynthesis of deoxyribonucleotides from the corresponding ribonucleotides. This Frog virus 3 (isolate Goorha) (FV-3) protein is Putative ribonucleoside-diphosphate reductase large subunit.